Reading from the N-terminus, the 477-residue chain is Succinate-semialdehyde dehydrogenase [NADP(+)] (477 aa).

Residues 142-143 (WN), 166-169 (KHSE), and 218-219 (GS) contribute to the NADP(+) site. The active-site Proton acceptor is E240. L241 is an NADP(+) binding site. C274 serves as the catalytic Nucleophile. An NADP(+)-binding site is contributed by E371.

This sequence belongs to the aldehyde dehydrogenase family.

The enzyme catalyses succinate semialdehyde + NADP(+) + H2O = succinate + NADPH + 2 H(+). It participates in amino-acid degradation; 4-aminobutanoate degradation. Catalyzes the NADP(+) dependent oxidation of succinate semialdehyde to succinate. The sequence is that of Succinate-semialdehyde dehydrogenase [NADP(+)] (ssdA) from Deinococcus radiodurans (strain ATCC 13939 / DSM 20539 / JCM 16871 / CCUG 27074 / LMG 4051 / NBRC 15346 / NCIMB 9279 / VKM B-1422 / R1).